We begin with the raw amino-acid sequence, 220 residues long: uncharacterized protein (220 aa).

The disordered stretch occupies residues 196–220; it reads KDDNSKDDNNDSEDLSKQIDNLKLD.

This is an uncharacterized protein from Invertebrate iridescent virus 6 (IIV-6).